The primary structure comprises 975 residues: Glycine dehydrogenase (decarboxylating) (975 aa).

The residue at position 723 (K723) is an N6-(pyridoxal phosphate)lysine.

Belongs to the GcvP family. In terms of assembly, the glycine cleavage system is composed of four proteins: P, T, L and H. Pyridoxal 5'-phosphate is required as a cofactor.

The catalysed reaction is N(6)-[(R)-lipoyl]-L-lysyl-[glycine-cleavage complex H protein] + glycine + H(+) = N(6)-[(R)-S(8)-aminomethyldihydrolipoyl]-L-lysyl-[glycine-cleavage complex H protein] + CO2. In terms of biological role, the glycine cleavage system catalyzes the degradation of glycine. The P protein binds the alpha-amino group of glycine through its pyridoxal phosphate cofactor; CO(2) is released and the remaining methylamine moiety is then transferred to the lipoamide cofactor of the H protein. The sequence is that of Glycine dehydrogenase (decarboxylating) from Burkholderia orbicola (strain MC0-3).